The chain runs to 144 residues: Neuritin-B (144 aa).

A signal peptide spans 1–27; that stretch reads MGLKLSGRYIFLVLAVHLAYLLQAVKA. Serine 114 carries the GPI-anchor amidated serine lipid modification. The propeptide at 115-144 is removed in mature form; sequence TGAPGPRLLFPAFLPLLIVFLSALLNWVLQ.

Belongs to the neuritin family.

The protein localises to the cell membrane. Functionally, modulates postsynaptic dendritic arbor elaboration and synaptic maturation. This chain is Neuritin-B (nrn1-b), found in Xenopus laevis (African clawed frog).